We begin with the raw amino-acid sequence, 370 residues long: Glutamate 5-kinase (370 aa).

K17 lines the ATP pocket. Residues S57, D144, and N156 each coordinate substrate. ATP is bound by residues 176 to 177 (SD) and 220 to 226 (TGGMVSK). Residues 282 to 360 (SGTLTLDDGA…SDLPAEMRRP (79 aa)) enclose the PUA domain.

The protein belongs to the glutamate 5-kinase family.

It localises to the cytoplasm. The catalysed reaction is L-glutamate + ATP = L-glutamyl 5-phosphate + ADP. Its pathway is amino-acid biosynthesis; L-proline biosynthesis; L-glutamate 5-semialdehyde from L-glutamate: step 1/2. In terms of biological role, catalyzes the transfer of a phosphate group to glutamate to form L-glutamate 5-phosphate. This Mycolicibacterium gilvum (strain PYR-GCK) (Mycobacterium gilvum (strain PYR-GCK)) protein is Glutamate 5-kinase.